Here is a 395-residue protein sequence, read N- to C-terminus: MDFTENEEEYEHWTHIERRVPFQGYRTYVASTYISFNVVGFVINAWVLYVVAPLLFAPAIKVPKSILFYIFALCVGDLMTMIAMLLLVIELVFGTWQFSSMVCTSYLIFDSMNKFMAPMIVFLISRTCYSTVCLDKTRGEKAATLKYAIIQFCIAFAFVMILLWPVFAYSQVFTFYMNPNSTAQEVTVMRKCGFFPPPQIEFWFNLIACITSYAVPLFGIIYWYVSVPFFLKRRALTTLVASSSMDAALRKVITTVLLLTVIYVLCWTPYWVSMFANRIWIMEKKSIIIISYFIHLLPYISCVAYPLIFTLLNRGIRSAHAKIVADQRRRFRSLTDEASSQIRTAIRTIPGTKMKKNEFLTRTEEISSDKIASEAVSEFREGLPSQTSFPDETLL.

The next 4 helical transmembrane spans lie at 38-58 (VVGFVINAWVLYVVAPLLFAP), 66-86 (ILFYIFALCVGDLMTMIAMLL), 89-109 (IELVFGTWQFSSMVCTSYLIF), and 148-168 (AIIQFCIAFAFVMILLWPVFA). An N-linked (GlcNAc...) asparagine glycan is attached at Asn-180. Helical transmembrane passes span 202-222 (FWFNLIACITSYAVPLFGIIY), 252-272 (VITTVLLLTVIYVLCWTPYWV), and 287-307 (IIIISYFIHLLPYISCVAYPL).

This sequence belongs to the G-protein coupled receptor 1 family.

Its subcellular location is the cell membrane. Functionally, not known. Putative receptor. The sequence is that of Probable G-protein coupled receptor npr-29 from Caenorhabditis elegans.